Consider the following 206-residue polypeptide: Small ribosomal subunit protein uS5 (206 aa).

The span at 1–15 (MTDTPTKQEIQSKND) shows a compositional bias: polar residues. Residues 1–50 (MTDTPTKQEIQSKNDNVPAATPVEQKKNNRNDRKRNRRGDSKNLERDSDW) form a disordered region. Over residues 38–50 (RGDSKNLERDSDW) the composition is skewed to basic and acidic residues. The 64-residue stretch at 50–113 (WQERVVQIRR…SDGKKNLVRV (64 aa)) folds into the S5 DRBM domain.

The protein belongs to the universal ribosomal protein uS5 family. As to quaternary structure, part of the 30S ribosomal subunit. Contacts proteins S4 and S8.

In terms of biological role, with S4 and S12 plays an important role in translational accuracy. Its function is as follows. Located at the back of the 30S subunit body where it stabilizes the conformation of the head with respect to the body. The sequence is that of Small ribosomal subunit protein uS5 from Prochlorococcus marinus (strain AS9601).